Here is a 312-residue protein sequence, read N- to C-terminus: tRNA uridine(34) hydroxylase (312 aa).

Residues 145-235 enclose the Rhodanese domain; it reads ENKNSVLVDM…GIIKYVRDAR (91 aa). The Cysteine persulfide intermediate role is filled by C199.

Belongs to the TrhO family.

It catalyses the reaction uridine(34) in tRNA + AH2 + O2 = 5-hydroxyuridine(34) in tRNA + A + H2O. In terms of biological role, catalyzes oxygen-dependent 5-hydroxyuridine (ho5U) modification at position 34 in tRNAs. The polypeptide is tRNA uridine(34) hydroxylase (Buchnera aphidicola subsp. Baizongia pistaciae (strain Bp)).